A 398-amino-acid chain; its full sequence is Bone morphogenetic protein 2-A (398 aa).

A signal peptide spans 1 to 23 (MVAGIHSLLLLLFYQVLLSGCTG). Positions 24–284 (LIPEEGKRKY…GHALHKRQKR (261 aa)) are excised as a propeptide. Residues asparagine 137, asparagine 202, and asparagine 340 are each glycosylated (N-linked (GlcNAc...) asparagine). 3 disulfide bridges follow: cysteine 298/cysteine 363, cysteine 327/cysteine 395, and cysteine 331/cysteine 397.

The protein belongs to the TGF-beta family. In terms of assembly, homodimer; disulfide-linked.

The protein localises to the secreted. Its function is as follows. Induces cartilage and bone formation. This is Bone morphogenetic protein 2-A (bmp2-a) from Xenopus laevis (African clawed frog).